The following is a 277-amino-acid chain: Diaminopimelate epimerase (277 aa).

Positions 11 and 65 each coordinate substrate. Cys-74 serves as the catalytic Proton donor. Residues 75–76 (GN), Asn-180, and 198–199 (ER) contribute to the substrate site. Cys-208 functions as the Proton acceptor in the catalytic mechanism. 209-210 (GT) contributes to the substrate binding site.

It belongs to the diaminopimelate epimerase family. As to quaternary structure, homodimer.

The protein resides in the cytoplasm. The catalysed reaction is (2S,6S)-2,6-diaminopimelate = meso-2,6-diaminopimelate. The protein operates within amino-acid biosynthesis; L-lysine biosynthesis via DAP pathway; DL-2,6-diaminopimelate from LL-2,6-diaminopimelate: step 1/1. Its function is as follows. Catalyzes the stereoinversion of LL-2,6-diaminopimelate (L,L-DAP) to meso-diaminopimelate (meso-DAP), a precursor of L-lysine and an essential component of the bacterial peptidoglycan. This Gemmatimonas aurantiaca (strain DSM 14586 / JCM 11422 / NBRC 100505 / T-27) protein is Diaminopimelate epimerase.